The chain runs to 842 residues: Glucans biosynthesis glucosyltransferase H (842 aa).

The next 6 helical transmembrane spans lie at 141-161, 194-214, 513-533, 570-590, 615-635, and 680-700; these read LLLLTLAQTVVATWYMKTILP, ILLLFAVLFCWVSAGFWTALM, VFLTGVMSYLSAPLWFMFLAL, LFASTMILLFLPKLLSIILIW, VLLAPVRMLFHTVFVVSAFLG, and FLFWLAPIVFSLILSPFVSVI.

The protein belongs to the glycosyltransferase 2 family. OpgH subfamily.

The protein resides in the cell inner membrane. Its pathway is glycan metabolism; osmoregulated periplasmic glucan (OPG) biosynthesis. Its function is as follows. Involved in the biosynthesis of osmoregulated periplasmic glucans (OPGs). This is Glucans biosynthesis glucosyltransferase H from Enterobacter sp. (strain 638).